Consider the following 236-residue polypeptide: Protein YIPF6 (236 aa).

Ala2 carries the post-translational modification N-acetylalanine. Topologically, residues 2–84 (AEAEDSPGEQ…HVLYPRKSNT (83 aa)) are cytoplasmic. Phosphoserine is present on Ser7. Residues 85-105 (LLRDWDLWGPLILCVSLALML) form a helical membrane-spanning segment. Over 106-116 (QKSSVEGKRDG) the chain is Lumenal. The helical transmembrane segment at 117 to 137 (GSPEFAEVFVIIWFGAVTITL) threads the bilayer. Over 138–147 (NSKLLGGNIS) the chain is Cytoplasmic. Residues 148–168 (FFQSLCVLGYCVLPLNIAMLI) traverse the membrane as a helical segment. Over 169–185 (CRLLLLAGQGPINFMIR) the chain is Lumenal. Residues 186–206 (LFVVLVMFAWSVIASTAFLAD) traverse the membrane as a helical segment. Topologically, residues 207-213 (CQPPNRK) are cytoplasmic. Residues 214–234 (ALAVYPVFLFYFVVSWMILTF) traverse the membrane as a helical segment. The Lumenal portion of the chain corresponds to 235 to 236 (TP).

The protein belongs to the YIP1 family. In terms of assembly, predominantly interacts with YIPF1 or YIPF2, but may also form a ternary complex with YIPF1 and YIPF2. This interaction may stabilize YIPF1 and YIPF2.

Its subcellular location is the golgi apparatus membrane. Its function is as follows. May be required for stable YIPF1 and YIPF2 protein expression. This Rattus norvegicus (Rat) protein is Protein YIPF6 (Yipf6).